Here is a 769-residue protein sequence, read N- to C-terminus: Probable beta-glucosidase M (769 aa).

The signal sequence occupies residues 1–22 (MHSNLGLAGLAGLLATASVCLS). Residues Asn-28, Asn-75, and Asn-262 are each glycosylated (N-linked (GlcNAc...) asparagine). The active site involves Asp-290. 4 N-linked (GlcNAc...) asparagine glycosylation sites follow: Asn-318, Asn-325, Asn-437, and Asn-546.

The protein belongs to the glycosyl hydrolase 3 family.

It localises to the secreted. It carries out the reaction Hydrolysis of terminal, non-reducing beta-D-glucosyl residues with release of beta-D-glucose.. It participates in glycan metabolism; cellulose degradation. Functionally, beta-glucosidases are one of a number of cellulolytic enzymes involved in the degradation of cellulosic biomass. Catalyzes the last step releasing glucose from the inhibitory cellobiose. The polypeptide is Probable beta-glucosidase M (bglM) (Neosartorya fischeri (strain ATCC 1020 / DSM 3700 / CBS 544.65 / FGSC A1164 / JCM 1740 / NRRL 181 / WB 181) (Aspergillus fischerianus)).